The primary structure comprises 1454 residues: Coiled-coil domain-containing protein 18 (1454 aa).

S45 bears the Phosphoserine mark. 4 coiled-coil regions span residues 107–138 (APVD…HSLM), 170–402 (ILEE…ISQL), 438–464 (KLVI…NLTA), and 508–1309 (TMNK…SGHE). Positions 828 to 851 (QKQRESSAEKLRKMEEKCESAAHE) are disordered. S1355 carries the phosphoserine modification.

The protein localises to the cytoplasm. It is found in the cytoskeleton. Its subcellular location is the microtubule organizing center. It localises to the centrosome. The protein resides in the centriolar satellite. This chain is Coiled-coil domain-containing protein 18 (CCDC18), found in Homo sapiens (Human).